The sequence spans 269 residues: Histone doublet H2B-H2A (269 aa).

The interval 1 to 168 (MATQKETTRK…LAGNAARDSK (168 aa)) is histone fold. The tract at residues 210–249 (RKKARKTTEKEASSPKKKAAPKKKKAASKQKKSLSDKELA) is disordered. Basic residues predominate over residues 224-241 (PKKKAAPKKKKAASKQKK).

The protein resides in the host nucleus. It is found in the host cytoplasm. The protein localises to the virion. Histone-like protein that is recruited to viral factories during viral replication and participates in viral DNA packaging and virion production probably by forming unstable nucleosome-like particles. May compact the viral DNA. The chain is Histone doublet H2B-H2A from Melbournevirus (MelV).